A 165-amino-acid chain; its full sequence is Pro-MCH (165 aa).

The first 21 residues, 1-21 (MAKMSLSSYLLILTFSLFSQG), serve as a signal peptide directing secretion. The segment at 68–88 (NDDSSFMNDEENKNSKNTGSK) is disordered. The residue at position 143 (Ile-143) is an Isoleucine amide. Cys-153 and Cys-162 are oxidised to a cystine.

This sequence belongs to the melanin-concentrating hormone family. Pro-MCH is processed differentially in the brain and in peripheral organs producing two neuropeptides; NEI and MCH. A third peptide, NGE, may also be produced. Preferential processing in neurons by prohormone convertase 2 (PC2) generates NEI. MCH is generated in neurons of the lateral hypothalmic area by several prohormone convertases including PC1/3, PC2 and PC5/6.

It is found in the secreted. In terms of biological role, MCH may act as a neurotransmitter or neuromodulator in a broad array of neuronal functions directed toward the regulation of goal-directed behavior, such as food intake, and general arousal. In Canis lupus familiaris (Dog), this protein is Pro-MCH (PMCH).